The following is a 430-amino-acid chain: DNA damage-inducible protein DIN7 (430 aa).

The tract at residues 1–96 (MGIPGLLPQL…HTETRRRKKR (96 aa)) is N-domain. 7 residues coordinate Mg(2+): aspartate 30, aspartate 78, glutamate 150, aspartate 152, aspartate 171, aspartate 173, and aspartate 227. Residues 114–247 (NAMEYFQKSV…VTAMKIVKRY (134 aa)) form an I-domain region.

Belongs to the XPG/RAD2 endonuclease family. It depends on Mg(2+) as a cofactor.

It is found in the nucleus. 5'-&gt;3' double-stranded DNA exonuclease. This is DNA damage-inducible protein DIN7 (DIN7) from Saccharomyces cerevisiae (strain ATCC 204508 / S288c) (Baker's yeast).